The chain runs to 252 residues: Chlorophyll a-b binding protein P4, chloroplastic (252 aa).

Tryptophan 56 is a binding site for chlorophyll b. Chlorophyll a is bound by residues phenylalanine 76 and glutamate 95. Chlorophyll b is bound at residue arginine 100. A run of 2 helical transmembrane segments spans residues 101 to 121 (WAML…IGII) and 134 to 154 (YFAS…YVEI). Residues serine 137, valine 143, glutamate 153, and arginine 156 each contribute to the chlorophyll b site. Chlorophyll a-binding residues include lysine 203, glutamate 204, asparagine 207, arginine 209, glutamine 221, and histidine 236.

It belongs to the light-harvesting chlorophyll a/b-binding (LHC) protein family. The LHC complex consists of chlorophyll a-b binding proteins. Binds at least 14 chlorophylls (8 Chl-a and 6 Chl-b) and carotenoids such as lutein and neoxanthin. is required as a cofactor. Photoregulated by reversible phosphorylation of its threonine residues.

Its subcellular location is the plastid. It localises to the chloroplast thylakoid membrane. The light-harvesting complex (LHC) functions as a light receptor, it captures and delivers excitation energy to photosystems with which it is closely associated. Functionally, may channel protons produced in the catalytic Mn center of water oxidation into the thylakoid lumen. The protein is Chlorophyll a-b binding protein P4, chloroplastic of Pisum sativum (Garden pea).